A 310-amino-acid chain; its full sequence is Aspartate carbamoyltransferase catalytic subunit (310 aa).

Residues arginine 55 and threonine 56 each coordinate carbamoyl phosphate. An L-aspartate-binding site is contributed by lysine 85. Carbamoyl phosphate contacts are provided by arginine 106, histidine 135, and glutamine 138. The L-aspartate site is built by arginine 168 and arginine 230. Residues leucine 268 and proline 269 each contribute to the carbamoyl phosphate site.

This sequence belongs to the aspartate/ornithine carbamoyltransferase superfamily. ATCase family. As to quaternary structure, heterododecamer (2C3:3R2) of six catalytic PyrB chains organized as two trimers (C3), and six regulatory PyrI chains organized as three dimers (R2).

It carries out the reaction carbamoyl phosphate + L-aspartate = N-carbamoyl-L-aspartate + phosphate + H(+). It participates in pyrimidine metabolism; UMP biosynthesis via de novo pathway; (S)-dihydroorotate from bicarbonate: step 2/3. Catalyzes the condensation of carbamoyl phosphate and aspartate to form carbamoyl aspartate and inorganic phosphate, the committed step in the de novo pyrimidine nucleotide biosynthesis pathway. The sequence is that of Aspartate carbamoyltransferase catalytic subunit from Buchnera aphidicola subsp. Acyrthosiphon pisum (strain APS) (Acyrthosiphon pisum symbiotic bacterium).